The primary structure comprises 261 residues: Calcium-binding protein 8 (261 aa).

The tract at residues 1–41 is disordered; it reads MRLPEQPGDGKPENETKGDQETPERGEEPRRSPAPDFPTWE. Residues 1–234 are Cytoplasmic-facing; it reads MRLPEQPGDG…QNRQTCVRKS (234 aa). The span at 8 to 33 shows a compositional bias: basic and acidic residues; it reads GDGKPENETKGDQETPERGEEPRRSP. 2 EF-hand domains span residues 78–113 and 114–149; these read EELD…LGYM and PSEV…KLVS. The Ca(2+) site is built by aspartate 91, aspartate 93, asparagine 95, glutamate 102, aspartate 127, aspartate 129, aspartate 131, glutamine 133, and glutamate 138. The chain crosses the membrane as a helical; Anchor for type IV membrane protein span at residues 235–255; the sequence is LICAFAMAFIISVMLIAANQI. Topologically, residues 256–261 are extracellular; the sequence is LRSGME.

As to quaternary structure, interacts with PI4KB. This binding competes with FREQ/NCS1 binding in a calcium-dependent manner. As to expression, brain-specific. High expression in the cerebellum, hippocampus, and cortex.

It is found in the golgi apparatus. The protein resides in the trans-Golgi network membrane. Its subcellular location is the cytoplasm. The protein localises to the perinuclear region. It localises to the cell membrane. In terms of biological role, negatively regulates Golgi-to-plasma membrane trafficking by interacting with PI4KB and inhibiting its activity. May play a role in the physiology of neurons and is potentially important in memory and learning. In Mus musculus (Mouse), this protein is Calcium-binding protein 8 (Caln1).